The chain runs to 383 residues: WAT1-related protein At3g18200 (383 aa).

The segment covering 1-16 (MCYQTSKKKRRSRKRR) has biased composition (basic residues). The disordered stretch occupies residues 1–23 (MCYQTSKKKRRSRKRRAQEEKEK). Helical transmembrane passes span 33–53 (VKLVVALITLQFCFAGFHIVS), 65–85 (VYPVYRNLLALLLIGPFAYFF), 91–111 (PPLTISLLAQFFFLALIGITA), 126–146 (TFASAMQNSVPAITFIMACAL), 158–178 (GVAKVLGTLVSIGGATVITLY), 204–224 (LTLGWLYLMGHCLSWAGWMVL), 237–257 (TLTSFTCFFGLIQFLVIALFV), 272–292 (LFTILYAGIIASGLVVYLQTW), 300–320 (VFVAVFQPLQTLLVAAMAFLI), and 325–345 (LYSGGIVGAVFIMLGLYLVLW). 2 consecutive EamA domains span residues 44–173 (FCFA…GGAT) and 216–344 (LSWA…YLVL).

The protein belongs to the drug/metabolite transporter (DMT) superfamily. Plant drug/metabolite exporter (P-DME) (TC 2.A.7.4) family.

The protein resides in the membrane. This is WAT1-related protein At3g18200 from Arabidopsis thaliana (Mouse-ear cress).